A 297-amino-acid polypeptide reads, in one-letter code: MRIVLITGISGSGKSVALNALEDAGYYCVDNLPPHVLPELARHLANEGQNRLAVAIDARSSASLDEMPGLIRALSREHDVRVLFLNASTQSLIQRFSETRRRHPLSGSPSHDADVGLLVSLEEAIERERDLVAPLAEFGHQIDTSNLRANVLRTWVKRFIEQKNDDLVLMFESFGFKRGVPLDADFMFDVRALPNPYYDHELRPLTGLDQPVVAFLDALPVVHQMLGDIESFLIKWLPHFREDNRSYLTVAIGCTGGQHRSVFLAETLAARLSRQANVIVRHRDAPVAVDASSRLVT.

8–15 (GISGSGKS) is a binding site for ATP. Residue 57 to 60 (DARS) coordinates GTP.

It belongs to the RapZ-like family.

Its function is as follows. Displays ATPase and GTPase activities. The protein is Nucleotide-binding protein BTH_I0482 of Burkholderia thailandensis (strain ATCC 700388 / DSM 13276 / CCUG 48851 / CIP 106301 / E264).